The sequence spans 143 residues: uncharacterized protein (143 aa).

The active site involves Cys12.

It belongs to the ArsC family.

This is an uncharacterized protein from Rhodospirillum rubrum.